The sequence spans 79 residues: CDC42 small effector protein 1-B (79 aa).

2 S-palmitoyl cysteine lipidation sites follow: cysteine 10 and cysteine 11. One can recognise a CRIB domain in the interval isoleucine 30 to glycine 43. A disordered region spans residues histidine 41–leucine 79. The segment covering methionine 63 to glutamine 72 has biased composition (basic and acidic residues).

It belongs to the CDC42SE/SPEC family.

It localises to the cytoplasm. Its subcellular location is the cytoskeleton. It is found in the cell membrane. Probably involved in the organization of the actin cytoskeleton by acting downstream of CDC42, inducing actin filament assembly. The sequence is that of CDC42 small effector protein 1-B (cdc42se1-b) from Xenopus laevis (African clawed frog).